The chain runs to 669 residues: DNA ligase (669 aa).

NAD(+)-binding positions include 34–38, 83–84, and glutamate 114; these read DAEYD and SL. Lysine 116 functions as the N6-AMP-lysine intermediate in the catalytic mechanism. NAD(+)-binding residues include arginine 137, glutamate 171, lysine 287, and lysine 311. Positions 405, 408, 423, and 428 each coordinate Zn(2+). Positions 591–669 constitute a BRCT domain; that stretch reads NVESYFAGKT…EERFLQELNK (79 aa).

It belongs to the NAD-dependent DNA ligase family. LigA subfamily. It depends on Mg(2+) as a cofactor. Mn(2+) is required as a cofactor.

It carries out the reaction NAD(+) + (deoxyribonucleotide)n-3'-hydroxyl + 5'-phospho-(deoxyribonucleotide)m = (deoxyribonucleotide)n+m + AMP + beta-nicotinamide D-nucleotide.. DNA ligase that catalyzes the formation of phosphodiester linkages between 5'-phosphoryl and 3'-hydroxyl groups in double-stranded DNA using NAD as a coenzyme and as the energy source for the reaction. It is essential for DNA replication and repair of damaged DNA. This is DNA ligase from Bacillus cereus (strain ZK / E33L).